The following is a 204-amino-acid chain: Large ribosomal subunit protein uL4 (204 aa).

Residues 53-73 (AFVSGGGKKPWRQKGRGGARA) are disordered.

The protein belongs to the universal ribosomal protein uL4 family. In terms of assembly, part of the 50S ribosomal subunit.

Its function is as follows. One of the primary rRNA binding proteins, this protein initially binds near the 5'-end of the 23S rRNA. It is important during the early stages of 50S assembly. It makes multiple contacts with different domains of the 23S rRNA in the assembled 50S subunit and ribosome. Functionally, forms part of the polypeptide exit tunnel. This Campylobacter concisus (strain 13826) protein is Large ribosomal subunit protein uL4.